Here is a 218-residue protein sequence, read N- to C-terminus: Serine/threonine-protein phosphatase 2 (218 aa).

Residues Asp22, His24, Asp51, and Asn77 each coordinate Mn(2+). The Proton donor role is filled by His78. His187 contributes to the Mn(2+) binding site.

This sequence belongs to the PPP phosphatase family. PP-1 subfamily. Mn(2+) is required as a cofactor.

The catalysed reaction is O-phospho-L-seryl-[protein] + H2O = L-seryl-[protein] + phosphate. The enzyme catalyses O-phospho-L-threonyl-[protein] + H2O = L-threonyl-[protein] + phosphate. With respect to regulation, inhibited by cadmium, copper, zinc when added activity but with less efficiency. Can hydrolyze phosphorylated Ser-, Thr- or Tyr-substrates in vitro. The natural substrate is unknown. In Salmonella typhimurium (strain LT2 / SGSC1412 / ATCC 700720), this protein is Serine/threonine-protein phosphatase 2 (pphB).